An 81-amino-acid polypeptide reads, in one-letter code: U-megalopygitoxin(3)-Mo4 (81 aa).

The first 20 residues, 1 to 20 (MNSKFVLIVVFLAVVSICFA), serve as a signal peptide directing secretion.

It belongs to the caterpillar 3 family. Contains 3 disulfide bonds. Expressed by the venom apparatus.

The protein localises to the secreted. Probable toxin. The chain is U-megalopygitoxin(3)-Mo4 from Megalopyge opercularis (Southern flannel moth).